We begin with the raw amino-acid sequence, 208 residues long: Urease accessory protein UreG 1 (208 aa).

Residue 14-21 participates in GTP binding; it reads GPVGSGKT.

Belongs to the SIMIBI class G3E GTPase family. UreG subfamily. As to quaternary structure, homodimer. UreD, UreF and UreG form a complex that acts as a GTP-hydrolysis-dependent molecular chaperone, activating the urease apoprotein by helping to assemble the nickel containing metallocenter of UreC. The UreE protein probably delivers the nickel.

The protein localises to the cytoplasm. In terms of biological role, facilitates the functional incorporation of the urease nickel metallocenter. This process requires GTP hydrolysis, probably effectuated by UreG. Its function is as follows. Disruption of the ure1 gene cluster suggests that it protects brucellae during their passage through the stomach. The major route of infection in human brucellosis is oral. The polypeptide is Urease accessory protein UreG 1 (Brucella abortus (strain 2308)).